Reading from the N-terminus, the 512-residue chain is uncharacterized protein (512 aa).

The next 2 membrane-spanning stretches (helical) occupy residues 20–40 (IFPV…IYIW) and 222–242 (GIAL…FGYI). The Histidine kinase domain occupies 297–512 (EQLIQSIEQT…TLMCYQIPLV (216 aa)). A Phosphohistidine; by autocatalysis modification is found at histidine 325.

Autophosphorylated.

It is found in the cell membrane. It carries out the reaction ATP + protein L-histidine = ADP + protein N-phospho-L-histidine.. Its function is as follows. Probable member of the two-component regulatory system SE_0166/SE_0165. May activate SE_0165 by phosphorylation. This is an uncharacterized protein from Staphylococcus epidermidis (strain ATCC 12228 / FDA PCI 1200).